Reading from the N-terminus, the 113-residue chain is Large ribosomal subunit protein uL24 (113 aa).

This sequence belongs to the universal ribosomal protein uL24 family. As to quaternary structure, part of the 50S ribosomal subunit.

Functionally, one of two assembly initiator proteins, it binds directly to the 5'-end of the 23S rRNA, where it nucleates assembly of the 50S subunit. One of the proteins that surrounds the polypeptide exit tunnel on the outside of the subunit. The polypeptide is Large ribosomal subunit protein uL24 (Chlamydia felis (strain Fe/C-56) (Chlamydophila felis)).